Reading from the N-terminus, the 380-residue chain is Chaperone protein DnaJ (380 aa).

The J domain maps to 5 to 70 (DYYEVLGLQK…EKRAAYDQYG (66 aa)). Residues 136-214 (GCKKDIRIST…CHGDGRVQKA (79 aa)) form a CR-type zinc finger. C149, C152, C166, C169, C188, C191, C202, and C205 together coordinate Zn(2+). CXXCXGXG motif repeat units follow at residues 149 to 156 (CDTCHGSG), 166 to 173 (CSHCHGSG), 188 to 195 (CPSCHGSG), and 202 to 209 (CKSCHGDG).

It belongs to the DnaJ family. As to quaternary structure, homodimer. The cofactor is Zn(2+).

It is found in the cytoplasm. Its function is as follows. Participates actively in the response to hyperosmotic and heat shock by preventing the aggregation of stress-denatured proteins and by disaggregating proteins, also in an autonomous, DnaK-independent fashion. Unfolded proteins bind initially to DnaJ; upon interaction with the DnaJ-bound protein, DnaK hydrolyzes its bound ATP, resulting in the formation of a stable complex. GrpE releases ADP from DnaK; ATP binding to DnaK triggers the release of the substrate protein, thus completing the reaction cycle. Several rounds of ATP-dependent interactions between DnaJ, DnaK and GrpE are required for fully efficient folding. Also involved, together with DnaK and GrpE, in the DNA replication of plasmids through activation of initiation proteins. In Actinobacillus pleuropneumoniae serotype 5b (strain L20), this protein is Chaperone protein DnaJ.